The following is an 819-amino-acid chain: Leucine--tRNA ligase (819 aa).

A 'HIGH' region motif is present at residues 40–51; that stretch reads PYPSGAGLHVGH. Positions 600-604 match the 'KMSKS' region motif; it reads KMSKS. Lys603 contacts ATP.

It belongs to the class-I aminoacyl-tRNA synthetase family.

It localises to the cytoplasm. It catalyses the reaction tRNA(Leu) + L-leucine + ATP = L-leucyl-tRNA(Leu) + AMP + diphosphate. The chain is Leucine--tRNA ligase from Chlamydia trachomatis serovar A (strain ATCC VR-571B / DSM 19440 / HAR-13).